The chain runs to 85 residues: UPF0291 protein SPCG_1462 (85 aa).

A disordered region spans residues 62 to 85; the sequence is TPEKLRQVQREKGLHGRSLDDPNS.

This sequence belongs to the UPF0291 family.

The protein resides in the cytoplasm. In Streptococcus pneumoniae (strain CGSP14), this protein is UPF0291 protein SPCG_1462.